A 519-amino-acid chain; its full sequence is Bifunctional pantoate ligase/cytidylate kinase (519 aa).

Residues 1 to 282 form a pantoate--beta-alanine ligase region; sequence MNLTILRTKT…CGNTRLIDHG (282 aa). 30–37 is a binding site for ATP; that stretch reads MGGLHQGH. Histidine 37 functions as the Proton donor in the catalytic mechanism. Residue glutamine 66 participates in (R)-pantoate binding. Beta-alanine is bound at residue glutamine 66. 155 to 158 contacts ATP; that stretch reads GEKD. A (R)-pantoate-binding site is contributed by glutamine 161. 192–195 contacts ATP; the sequence is CSSR. The segment at 283 to 519 is cytidylate kinase; sequence FLMKRNPIVA…PQEVWPTNAT (237 aa).

In the N-terminal section; belongs to the pantothenate synthetase family. The protein in the C-terminal section; belongs to the cytidylate kinase family. Type 1 subfamily.

The protein resides in the cytoplasm. The catalysed reaction is (R)-pantoate + beta-alanine + ATP = (R)-pantothenate + AMP + diphosphate + H(+). It catalyses the reaction CMP + ATP = CDP + ADP. The enzyme catalyses dCMP + ATP = dCDP + ADP. It participates in cofactor biosynthesis; (R)-pantothenate biosynthesis; (R)-pantothenate from (R)-pantoate and beta-alanine: step 1/1. In terms of biological role, catalyzes the condensation of pantoate with beta-alanine in an ATP-dependent reaction via a pantoyl-adenylate intermediate. Functionally, catalyzes the transfer of a phosphate group from ATP to either CMP or dCMP to form CDP or dCDP and ADP, respectively. In Prochlorococcus marinus (strain SARG / CCMP1375 / SS120), this protein is Bifunctional pantoate ligase/cytidylate kinase.